The sequence spans 216 residues: Ribosomal RNA large subunit methyltransferase E (216 aa).

5 residues coordinate S-adenosyl-L-methionine: G60, W62, D80, D96, and D121. The active-site Proton acceptor is K161.

It belongs to the class I-like SAM-binding methyltransferase superfamily. RNA methyltransferase RlmE family.

The protein localises to the cytoplasm. The catalysed reaction is uridine(2552) in 23S rRNA + S-adenosyl-L-methionine = 2'-O-methyluridine(2552) in 23S rRNA + S-adenosyl-L-homocysteine + H(+). Its function is as follows. Specifically methylates the uridine in position 2552 of 23S rRNA at the 2'-O position of the ribose in the fully assembled 50S ribosomal subunit. The sequence is that of Ribosomal RNA large subunit methyltransferase E from Pseudomonas fluorescens (strain SBW25).